A 453-amino-acid chain; its full sequence is Frizzled/smoothened-like sans CRD protein G (453 aa).

The signal sequence occupies residues 1–24 (MIYILKNFIIILFFLLIILKRIES). Residues 25-89 (QSLPSLPSPT…PFFTLDEWNK (65 aa)) are Extracellular-facing. N-linked (GlcNAc...) asparagine glycans are attached at residues N49 and N67. The helical transmembrane segment at 90–110 (FLYMSLVMGTISFLCGLFLLI) threads the bilayer. The Cytoplasmic segment spans residues 111-124 (TYSPIVNKTHNRHT). Residues 125-145 (IGVMCMSFGVCLAMCSDMWNF) form a helical membrane-spanning segment. Residues 146–170 (GSNFTDQKSICPSPGQYLTTSNSRC) are Extracellular-facing. A glycan (N-linked (GlcNAc...) asparagine) is linked at N148. The chain crosses the membrane as a helical span at residues 171–191 (LGSGIVLQFGGVFGFLNWTLL). The Cytoplasmic segment spans residues 192-209 (SFDLFMNIKGIITKNYDK). Residues 210 to 230 (YYFVATFIIAIIFTFVPIVND) traverse the membrane as a helical segment. Residues 231 to 250 (QYSMSYIGLGCWLGSAVYQL) are Extracellular-facing. Residues 251-271 (IFFWILLSICLIVSSVFIILI) traverse the membrane as a helical segment. The Cytoplasmic segment spans residues 272–296 (LKEIYIIIKQSKQKTSLKGNIRPLL). Residues 297–317 (CITVTSFAFFYMFFYYISIVI) form a helical membrane-spanning segment. Over 318–352 (EGDYYERILNEYTDCLMDPTKDVSECKFPRMSVAN) the chain is Extracellular. Residues 353 to 373 (EFVFLLCLRLLGIGAFIFYGI) traverse the membrane as a helical segment. At 374–453 (NKEVKKIWLN…DDNFKPIIIK (80 aa)) the chain is on the cytoplasmic side.

This sequence belongs to the G-protein coupled receptor Fz/Smo family.

Its subcellular location is the membrane. This chain is Frizzled/smoothened-like sans CRD protein G (fscG), found in Dictyostelium discoideum (Social amoeba).